The following is an 823-amino-acid chain: Kinesin-like protein KIN-7N (823 aa).

A Kinesin motor domain is found at 3–325; sequence KICVAVRVRP…LQFASRAKRI (323 aa). Residue 83 to 90 participates in ATP binding; it reads GQTSSGKT. Coiled coils occupy residues 341–414, 527–557, and 696–786; these read LKRQ…NLNN, RENH…FNEQ, and EKKL…MEEE.

It belongs to the TRAFAC class myosin-kinesin ATPase superfamily. Kinesin family. KIN-7 subfamily.

The sequence is that of Kinesin-like protein KIN-7N from Arabidopsis thaliana (Mouse-ear cress).